A 138-amino-acid polypeptide reads, in one-letter code: Phosphoribosyl-AMP cyclohydrolase (138 aa).

Asp92 contacts Mg(2+). Zn(2+) is bound at residue Cys93. Mg(2+) contacts are provided by Asp94 and Asp96. Cys109 and Cys116 together coordinate Zn(2+).

The protein belongs to the PRA-CH family. In terms of assembly, homodimer. It depends on Mg(2+) as a cofactor. Zn(2+) serves as cofactor.

It is found in the cytoplasm. The enzyme catalyses 1-(5-phospho-beta-D-ribosyl)-5'-AMP + H2O = 1-(5-phospho-beta-D-ribosyl)-5-[(5-phospho-beta-D-ribosylamino)methylideneamino]imidazole-4-carboxamide. The protein operates within amino-acid biosynthesis; L-histidine biosynthesis; L-histidine from 5-phospho-alpha-D-ribose 1-diphosphate: step 3/9. Catalyzes the hydrolysis of the adenine ring of phosphoribosyl-AMP. This chain is Phosphoribosyl-AMP cyclohydrolase, found in Clavibacter sepedonicus (Clavibacter michiganensis subsp. sepedonicus).